The primary structure comprises 180 residues: CASP-like protein 2D1 (180 aa).

Residues 1–7 are Cytoplasmic-facing; the sequence is MAASGLK. Residues 8-28 form a helical membrane-spanning segment; it reads VPEMALRVCVVPLALASLWEM. Over 29-48 the chain is Extracellular; it reads ATNAQADDTYGEVKFSDLSG. The helical transmembrane segment at 49–69 threads the bilayer; that stretch reads FSYLVGVNAVTAAYALVSILL. The Cytoplasmic portion of the chain corresponds to 70–79; sequence SSLKPLARYD. The helical transmembrane segment at 80 to 100 threads the bilayer; the sequence is WVILVMDQASAYLLVTSASAA. The Extracellular portion of the chain corresponds to 101–129; sequence AELLQLARRGDREVSWGEVCSYFGRFCGK. Residues 130 to 150 form a helical membrane-spanning segment; the sequence is ATVSLALHAAALACFVALALV. Residues 151–180 are Cytoplasmic-facing; sequence SAFRVLSTTGSSCHPPKHAQAQEHEQGRYN. Residues 161-180 form a disordered region; it reads SSCHPPKHAQAQEHEQGRYN. A compositionally biased stretch (basic and acidic residues) spans 170–180; that stretch reads QAQEHEQGRYN.

The protein belongs to the Casparian strip membrane proteins (CASP) family. In terms of assembly, homodimer and heterodimers.

Its subcellular location is the cell membrane. The protein is CASP-like protein 2D1 of Sorghum bicolor (Sorghum).